A 280-amino-acid chain; its full sequence is Putative S-adenosyl-L-methionine-dependent methyltransferase FRAAL3836 (280 aa).

Residues Asp-121 and 150 to 151 contribute to the S-adenosyl-L-methionine site; that span reads DL.

The protein belongs to the UPF0677 family.

Functionally, exhibits S-adenosyl-L-methionine-dependent methyltransferase activity. In Frankia alni (strain DSM 45986 / CECT 9034 / ACN14a), this protein is Putative S-adenosyl-L-methionine-dependent methyltransferase FRAAL3836.